Consider the following 280-residue polypeptide: 3-hydroxyanthranilate 3,4-dioxygenase (280 aa).

The tract at residues 1-160 (MAIPVNVKKW…SEQYKSGKPD (160 aa)) is domain A (catalytic). Arg-43 is a binding site for O2. Fe cation contacts are provided by His-47, Glu-53, and His-91. Glu-53 is a binding site for substrate. Residues Arg-95 and Glu-105 each coordinate substrate. Positions 161-177 (PAQPIGKMPFFLNTEQV) are linker. The segment at 178-280 (MEPFSFQNWL…IALSTSQVPA (103 aa)) is domain B.

Belongs to the 3-HAO family. In terms of assembly, monomer. It depends on Fe(2+) as a cofactor.

The protein localises to the cytoplasm. Its subcellular location is the cytosol. It carries out the reaction 3-hydroxyanthranilate + O2 = (2Z,4Z)-2-amino-3-carboxymuconate 6-semialdehyde. It participates in cofactor biosynthesis; NAD(+) biosynthesis; quinolinate from L-kynurenine: step 3/3. Its function is as follows. Catalyzes the oxidative ring opening of 3-hydroxyanthranilate to 2-amino-3-carboxymuconate semialdehyde, which spontaneously cyclizes to quinolinate. This Xenopus tropicalis (Western clawed frog) protein is 3-hydroxyanthranilate 3,4-dioxygenase (haao).